An 82-amino-acid polypeptide reads, in one-letter code: Putative defensin-like protein 191 (82 aa).

A signal peptide spans 1–28 (MAKSVNATGFITYMVIFLILTGISRVKA). Intrachain disulfides connect cysteine 33–cysteine 79, cysteine 46–cysteine 65, cysteine 51–cysteine 74, and cysteine 55–cysteine 76.

The protein belongs to the DEFL family.

The protein resides in the secreted. The polypeptide is Putative defensin-like protein 191 (Arabidopsis thaliana (Mouse-ear cress)).